The chain runs to 329 residues: Short-chain dehydrogenase/reductase prx4 (329 aa).

The signal sequence occupies residues 1–21; that stretch reads MIPRWQPASIALLLHLDTLRC. Residues serine 58, isoleucine 60, and asparagine 81 each coordinate NADP(+). Asparagine 91 carries N-linked (GlcNAc...) asparagine glycosylation. Positions 98, 121, 161, 194, 198, and 229 each coordinate NADP(+). The active-site Proton acceptor is tyrosine 194. The active-site Lowers pKa of active site Tyr is lysine 198. Residues 238 to 258 traverse the membrane as a helical segment; that stretch reads GPLMAAGLPVSSAHMVGLAVV.

It belongs to the short-chain dehydrogenases/reductases (SDR) family.

The protein resides in the membrane. The protein operates within sesquiterpene biosynthesis. Short-chain dehydrogenase/reductase; part of the gene cluster that mediates the biosynthesis of PR-toxin, a bicyclic sesquiterpene belonging to the eremophilane class and acting as a mycotoxin. The first step of the pathway is catalyzed by the aristolochene synthase which performs the cyclization of trans,trans-farnesyl diphosphate (FPP) to the bicyclic sesquiterpene aristolochene. Following the formation of aristolochene, the non-oxygenated aristolochene is converted to the trioxygenated intermediate eremofortin B, via 7-epi-neopetasone. This conversion appears to involve three enzymes, a hydroxysterol oxidase-like enzyme, the quinone-oxidase prx3 that forms the quinone-type-structure in the bicyclic nucleus of aristolochene with the C8-oxo group and the C-3 hydroxyl group, and the P450 monooxygenase prx9 that introduces the epoxide at the double bond between carbons 1 and 2. No monoxy or dioxy-intermediates have been reported to be released to the broth, so these three early oxidative reactions may be coupled together. Eremofortin B is further oxidized by another P450 monooxygenase, that introduces a second epoxide between carbons 7 and 11 prior to acetylation to eremofortin A by the acetyltransferase prx11. The second epoxidation may be performed by a second P450 monooxygenase. After the acetylation step, eremofortin A is converted to eremofortin C and then to PR-toxin. First the conversion of eremofortin A to eremofortin C proceeds by oxidation of the side chain of the molecule at C-12 and is catalyzed by the short-chain oxidoreductase prx1. The cytochrome P450 monooxygenase prx8 also plays a role in this step. The primary alcohol formed at C-12 is finally oxidized by the short-chain alcohol dehydrogenase prx4 that forms PR-toxin. The sequence is that of Short-chain dehydrogenase/reductase prx4 from Penicillium rubens (strain ATCC 28089 / DSM 1075 / NRRL 1951 / Wisconsin 54-1255) (Penicillium chrysogenum).